Reading from the N-terminus, the 349-residue chain is Isopentenyl-diphosphate delta-isomerase (349 aa).

Residue 6-7 (RK) participates in substrate binding. Residues 62–64 (AMT), Ser93, and Asn122 each bind FMN. Gln152 contacts substrate. Glu153 contributes to the Mg(2+) binding site. FMN is bound by residues Lys184, Thr214, 258–259 (GG), and 280–281 (AG).

The protein belongs to the IPP isomerase type 2 family. In terms of assembly, homooctamer. Dimer of tetramers. The cofactor is FMN. NADPH serves as cofactor. Requires Mg(2+) as cofactor.

The protein resides in the cytoplasm. It carries out the reaction isopentenyl diphosphate = dimethylallyl diphosphate. Its function is as follows. Involved in the biosynthesis of isoprenoids. Catalyzes the 1,3-allylic rearrangement of the homoallylic substrate isopentenyl (IPP) to its allylic isomer, dimethylallyl diphosphate (DMAPP). The polypeptide is Isopentenyl-diphosphate delta-isomerase (Bacillus licheniformis (strain ATCC 14580 / DSM 13 / JCM 2505 / CCUG 7422 / NBRC 12200 / NCIMB 9375 / NCTC 10341 / NRRL NRS-1264 / Gibson 46)).